The chain runs to 267 residues: MIVHPSRENFSSAVNKGSDFRLKGEPLKHVLLVDDDVAMRHLIIEYLTIHAFKVTAVADSTQFTRVLSSATVDVVVVDLNLVREDGLEIVRNLAAKSDIPIIIISGDRLEETDKVVALELGASDFIAKPFSIREFLARIRVALRVRPNVVRSKDRRSFCFTDWTLNLRQRRLMSEAGGEVKLTAGEFNLLLAFLEKPRDVLSREQLLIASRVRDEEVYDRSIDVLILRLRRKLEADPSSPQLIKTARGAGYFFDADVQVSHGGTMAA.

The region spanning 29-143 (HVLLVDDDVA…EFLARIRVAL (115 aa)) is the Response regulatory domain. At aspartate 78 the chain carries 4-aspartylphosphate. The ompR/PhoB-type DNA-binding region spans 155–255 (RRSFCFTDWT…ARGAGYFFDA (101 aa)).

Phosphorylated by wide host range (WHR) VirA protein.

It localises to the cytoplasm. Functionally, virG is required for the positive regulation of at least two vir loci encoded by the Ti plasmid of A.tumefaciens. This is Regulatory protein VirG (virG) from Rhizobium radiobacter (Agrobacterium tumefaciens).